The chain runs to 1180 residues: MNKISDTIIITSTSNEDEVDNNNNNNNLKEIDRSPRVNNNNNNILTNVNNNKNNTITSSGGSDSSSSSSNNNNNKIKKSKKHKEKEHMDSIVKLYSGKFDSWMVICHLFKYRDNPGIVDFLCNKMYNLEDKDIDFYITQLCILLINQPHDQKASFSSLARFILDRCASSFRFAIKAYWIFQAFEEDGEKNLFSIEGSVYLHSPSTSPKDVPMYSNDQIVPIDLDKIYNQSQYDDDDFDLSDDDGGFEIIKKNDHHYENDHHIENDPKKDINSNNNNNNNINNNNSNNDDNNNNEILPNENSDNSINDENNQYGNSNNNNNISGENDNIKIDINSQNKSDSNIETLNSTLCEETKTSPIKDDMENNNNNNNNNNNNNNNNNNNNNINNNNINNNNINNNNNINYGHINGSLSTLDGIGQPYISQPNDPIENITQILKRNRIIYKKVEEKKELATRLREFCEMSVITCSRPLITRPRTSSLPSPLISYNSGKIGGNYHKILSPSSVDSTSLISEDDKIIEKEEEDNVVEDDDDDEVNSEDFIPTATTTATTTTTTIPNHLSKTTSGVGINSNSSTPININSAGAGAGGGGEINHIGYDDISYLDKCKTPPAESKLSDHDFEFELSKSHRCDYLNDILSFIQKLAHISKILLPIPIDLRQAKLKHEISLLNINLPLGLYVPLWQSSNHHCVVRIPPEEVKILNSRERVPFLLVLEVIESEHEALSSNIFEVVSSYLQYTTGNSALKKDDIKRKYYSEKFKKSFLNSSINSTISNSSDSCTTETTTTSPVATSPTLPINIPHSKLINDGSNSISKSLPVTPTQSTVLNNLISTSTAISPPSQQQQLPSPSNTTTTTTTTTTNTNNTTTTTTTTTTTLSTSPTNEKILNENKQNSSPFGESWQEKIERYKKISPFGDYPNWRLYSVIVKTGDDCRQEQMAVQLISKFDEIWKETRLPLYLRPYSILVTSSGGGIIETIPDTMSLHNLKKSTPGFTTLLNYFKSTYGDPSGLRFRTAQSNFIESMAAYSIVTYILQIKDRHNGNILIDKEGHIVHIDFGFILSNSPGNISFESAPFKLTQELVDVMGGIQSGQFQYFKVLCVRGLIEARKQVDKIISLIEIMMSGPKMSCFVGGKEVIEQLKARFFLDVNERECSTLVENLISYSIDHFKTRYYDKYQSWLNGIYQ.

The PIK helical domain occupies 1 to 206 (MNKISDTIII…SVYLHSPSTS (206 aa)). 5 disordered regions span residues 15–84 (NEDE…KHKE), 257–327 (ENDH…ENDN), 355–391 (TSPI…NNIN), 768–799 (TISN…IPHS), and 832–894 (AISP…SPFG). The segment covering 38–74 (NNNNNNILTNVNNNKNNTITSSGGSDSSSSSSNNNNN) has biased composition (low complexity). Residues 75 to 84 (KIKKSKKHKE) are compositionally biased toward basic residues. Over residues 257 to 270 (ENDHHIENDPKKDI) the composition is skewed to basic and acidic residues. Low complexity-rich tracts occupy residues 271–325 (NSNN…SGEN), 364–391 (NNNN…NNIN), 768–793 (TISN…PTLP), and 835–879 (PPSQ…SPTN). Positions 895–1164 (ESWQEKIERY…LISYSIDHFK (270 aa)) constitute a PI3K/PI4K catalytic domain. The segment at 901-907 (IERYKKI) is G-loop. Residues 1030–1038 (QIKDRHNGN) form a catalytic loop region. The tract at residues 1049–1073 (HIDFGFILSNSPGNISFESAPFKLT) is activation loop.

Belongs to the PI3/PI4-kinase family. Type III PI4K subfamily.

The catalysed reaction is a 1,2-diacyl-sn-glycero-3-phospho-(1D-myo-inositol) + ATP = a 1,2-diacyl-sn-glycero-3-phospho-(1D-myo-inositol 4-phosphate) + ADP + H(+). In terms of biological role, acts on phosphatidylinositol (PtdIns) in the first committed step in the production of the second messenger inositol-1,4,5,-trisphosphate. The sequence is that of Phosphatidylinositol 4-kinase (pikD) from Dictyostelium discoideum (Social amoeba).